Reading from the N-terminus, the 308-residue chain is Cell division protein FtsX (308 aa).

Topologically, residues 1-24 (MISRFFRHLFEALKSLKRNGWMTV) are cytoplasmic. A helical transmembrane segment spans residues 25 to 45 (AAVSSVMITLTLVAIFASVIF). The Extracellular portion of the chain corresponds to 46–178 (NTAKLATDIE…NTERLFKLAS (133 aa)). The chain crosses the membrane as a helical span at residues 179 to 199 (FIRVWGLGIAALLIFIAVFLI). Over 200-236 (SNTIRITIISRSREIQIMRLVGAKNSYIRGPFLLEGA) the chain is Cytoplasmic. The chain crosses the membrane as a helical span at residues 237-257 (FIGLLGAIAPSVLVFIVYQIV). The Extracellular portion of the chain corresponds to 258–276 (YQSVNKSLVGQNLSMISPD). Residues 277–297 (LFSPLMIALLFVIGVFIGSLG) form a helical membrane-spanning segment. Topologically, residues 298–308 (SGISMRRFLKI) are cytoplasmic.

The protein belongs to the ABC-4 integral membrane protein family. FtsX subfamily. In terms of assembly, homodimer. Interacts with FtsE; forms a membrane-associated complex. Interacts (via large extracellular loop) with PcsB (via N-terminal coiled-coil domain). This interaction directs PcsB to equatorial and septal sites of dividing cells.

The protein resides in the cell membrane. Its function is as follows. Part of the ABC transporter FtsEX involved in asymmetric cellular division facilitating the initiation of sporulation. Required in maintaining normal growth and cellular morphology. This is Cell division protein FtsX from Streptococcus pneumoniae serotype 2 (strain D39 / NCTC 7466).